The chain runs to 483 residues: Regulatory protein ViaA (483 aa).

It belongs to the ViaA family. In terms of assembly, homodimer. Interacts with RavA.

It is found in the cytoplasm. Functionally, component of the RavA-ViaA chaperone complex, which may act on the membrane to optimize the function of some of the respiratory chains. ViaA stimulates the ATPase activity of RavA. This Escherichia coli O139:H28 (strain E24377A / ETEC) protein is Regulatory protein ViaA.